The primary structure comprises 526 residues: Glutamyl-tRNA(Gln) amidotransferase subunit A, mitochondrial (526 aa).

Catalysis depends on charge relay system residues K76 and S171. S195 (acyl-ester intermediate) is an active-site residue.

The protein belongs to the amidase family. GatA subfamily. As to quaternary structure, subunit of the heterotrimeric GatCAB amidotransferase (AdT) complex, composed of A (QRSL1), B (GATB) and C (GATC) subunits.

It is found in the mitochondrion. The enzyme catalyses L-glutamyl-tRNA(Gln) + L-glutamine + ATP + H2O = L-glutaminyl-tRNA(Gln) + L-glutamate + ADP + phosphate + H(+). Functionally, allows the formation of correctly charged Gln-tRNA(Gln) through the transamidation of misacylated Glu-tRNA(Gln) in the mitochondria. The reaction takes place in the presence of glutamine and ATP through an activated gamma-phospho-Glu-tRNA(Gln). This is Glutamyl-tRNA(Gln) amidotransferase subunit A, mitochondrial from Canis lupus familiaris (Dog).